Reading from the N-terminus, the 98-residue chain is Integration host factor subunit alpha (98 aa).

Residues 51-71 are disordered; it reads NFDLRDKNERPGRNPKTGEDI. Residues 53–69 show a composition bias toward basic and acidic residues; it reads DLRDKNERPGRNPKTGE.

The protein belongs to the bacterial histone-like protein family. In terms of assembly, heterodimer of an alpha and a beta chain.

This protein is one of the two subunits of integration host factor, a specific DNA-binding protein that functions in genetic recombination as well as in transcriptional and translational control. This chain is Integration host factor subunit alpha, found in Vibrio parahaemolyticus serotype O3:K6 (strain RIMD 2210633).